The sequence spans 463 residues: Putative protein FAM90A2P (463 aa).

Disordered regions lie at residues 1–42, 67–115, 150–295, and 326–365; these read MTAR…DPRL, ALVP…PQRK, MPVH…PAQA, and ALEN…PPHS. Basic and acidic residues-rich tracts occupy residues 74 to 83, 97 to 114, and 159 to 170; these read GKKEGKENLK, NKDK…DPQR, and PCVDPELADRSA. Residues 180–198 show a composition bias toward low complexity; sequence LASLSPLRKASLRSSSSLG.

It belongs to the FAM90 family.

This chain is Putative protein FAM90A2P (FAM90A2P), found in Homo sapiens (Human).